A 234-amino-acid polypeptide reads, in one-letter code: 1-(5-phosphoribosyl)-5-[(5-phosphoribosylamino)methylideneamino] imidazole-4-carboxamide isomerase (234 aa).

The active-site Proton acceptor is the Asp9. Asp131 functions as the Proton donor in the catalytic mechanism.

Belongs to the HisA/HisF family.

The protein resides in the cytoplasm. The enzyme catalyses 1-(5-phospho-beta-D-ribosyl)-5-[(5-phospho-beta-D-ribosylamino)methylideneamino]imidazole-4-carboxamide = 5-[(5-phospho-1-deoxy-D-ribulos-1-ylimino)methylamino]-1-(5-phospho-beta-D-ribosyl)imidazole-4-carboxamide. It participates in amino-acid biosynthesis; L-histidine biosynthesis; L-histidine from 5-phospho-alpha-D-ribose 1-diphosphate: step 4/9. The sequence is that of 1-(5-phosphoribosyl)-5-[(5-phosphoribosylamino)methylideneamino] imidazole-4-carboxamide isomerase from Staphylococcus epidermidis (strain ATCC 12228 / FDA PCI 1200).